A 327-amino-acid chain; its full sequence is Delta(3,5)-Delta(2,4)-dienoyl-CoA isomerase, mitochondrial (327 aa).

The transit peptide at 1–33 directs the protein to the mitochondrion; the sequence is MATAMTVSSKLRGLLMQQLRGTSQLYFNISLRS. 115–119 contacts substrate; it reads SGIDL. The residue at position 147 (K147) is an N6-acetyllysine. G173 is a binding site for substrate. Position 230 is an N6-succinyllysine (K230). S267 is subject to Phosphoserine. K316 bears the N6-succinyllysine mark. The Microbody targeting signal motif lies at 325 to 327; it reads SKL. K326 bears the N6-acetyllysine mark.

This sequence belongs to the enoyl-CoA hydratase/isomerase family. In terms of assembly, homohexamer.

The protein localises to the mitochondrion. The protein resides in the peroxisome. The enzyme catalyses (3E,5Z)-octadienoyl-CoA = (2E,4E)-octadienoyl-CoA. It carries out the reaction (3E,5Z,8Z,11Z,14Z)-eicosapentaenoyl-CoA = (2E,4E,8Z,11Z,14Z)-eicosapentaenoyl-CoA. It functions in the pathway lipid metabolism; fatty acid beta-oxidation. Functionally, isomerization of 3-trans,5-cis-dienoyl-CoA to 2-trans,4-trans-dienoyl-CoA. This Mus musculus (Mouse) protein is Delta(3,5)-Delta(2,4)-dienoyl-CoA isomerase, mitochondrial.